Consider the following 239-residue polypeptide: Fatty acid metabolism regulator protein (239 aa).

The HTH gntR-type domain maps to glutamine 6 to phenylalanine 74. Positions glutamate 34 to glutamine 53 form a DNA-binding region, H-T-H motif.

In terms of assembly, homodimer.

The protein resides in the cytoplasm. Functionally, multifunctional regulator of fatty acid metabolism. This chain is Fatty acid metabolism regulator protein, found in Proteus mirabilis (strain HI4320).